A 967-amino-acid chain; its full sequence is Probable serine/threonine-protein kinase DDB_G0290621 (967 aa).

Disordered regions lie at residues 65 to 122 (EDSD…KEKE), 215 to 251 (SSLSSSINNSSNNNSNISSSPLSSSPLTLSSSSSSSS), and 287 to 326 (QQQLPPPPPSQQQQQQQQQQQQQNNSMLQQSNNNNISPRT). Over residues 66 to 94 (DSDEDDDDEEDEEDEEDSDEEEDDDVVED) the composition is skewed to acidic residues. Residues 95–122 (DNTKDIGKSRDSDKSIKGKEKGKEKEKE) show a composition bias toward basic and acidic residues. Residues 297-326 (QQQQQQQQQQQQQNNSMLQQSNNNNISPRT) show a composition bias toward low complexity. Residues 345–610 (FNDSNKIGEG…EIRSRLSEII (266 aa)) form the Protein kinase domain. Residues 351–359 (IGEGGQCSI) and Lys-368 contribute to the ATP site. The Proton acceptor role is filled by Asp-467. 3 disordered regions span residues 634-667 (DDSLINNNNNNNQNNNNQNNNNNNNNNNNNNNNN), 700-752 (STSN…NNNI), and 862-882 (TSSSSNKNNNNNNNDNNNPSN). Residues 639-666 (NNNNNNNQNNNNQNNNNNNNNNNNNNNN) show a composition bias toward low complexity. Residues 863-882 (SSSSNKNNNNNNNDNNNPSN) are compositionally biased toward low complexity.

The protein belongs to the protein kinase superfamily. TKL Ser/Thr protein kinase family.

The catalysed reaction is L-seryl-[protein] + ATP = O-phospho-L-seryl-[protein] + ADP + H(+). It carries out the reaction L-threonyl-[protein] + ATP = O-phospho-L-threonyl-[protein] + ADP + H(+). The polypeptide is Probable serine/threonine-protein kinase DDB_G0290621 (Dictyostelium discoideum (Social amoeba)).